A 454-amino-acid chain; its full sequence is Ornithine aminotransferase (454 aa).

Position 280 is an N6-(pyridoxal phosphate)lysine (Lys-280).

Belongs to the class-III pyridoxal-phosphate-dependent aminotransferase family. Pyridoxal 5'-phosphate serves as cofactor.

It is found in the cytoplasm. It carries out the reaction a 2-oxocarboxylate + L-ornithine = L-glutamate 5-semialdehyde + an L-alpha-amino acid. The protein operates within amino-acid biosynthesis; L-proline biosynthesis; L-glutamate 5-semialdehyde from L-ornithine: step 1/1. The protein is Ornithine aminotransferase (otaA) of Emericella nidulans (strain FGSC A4 / ATCC 38163 / CBS 112.46 / NRRL 194 / M139) (Aspergillus nidulans).